The primary structure comprises 313 residues: Protein sprouty homolog 2 (313 aa).

Polar residues predominate over residues 1 to 14; that stretch reads METRVQHGSGSQAL. 2 disordered regions span residues 1–31 and 54–146; these read METR…PDLR and EYTE…VADG. Basic and acidic residues-rich tracts occupy residues 17–31 and 78–89; these read ARRD…PDLR and KSERPHGLPEHR. Low complexity predominate over residues 108-131; it reads SRSISTVSTGSRSSTRTSTSSNSS. Polar residues predominate over residues 132–141; it reads EQRLLGSSSG. One can recognise an SPR domain in the interval 175 to 289; sequence RCEDCGKCKC…CYDRVNRPGC (115 aa).

It belongs to the sprouty family. Brain and interlimb region.

It localises to the cytoplasm. It is found in the membrane. Functionally, acts as an antagonist of FGF-induced retinal lens fiber differentiation. Inhibits TGFB-induced epithelial-to-mesenchymal transition in retinal lens epithelial cells. May play an important role in FGF-mediated patterning of the mid/hindbrain region by acting to modulate the signaling effects of FGF8. This is Protein sprouty homolog 2 (SPRY2) from Gallus gallus (Chicken).